Reading from the N-terminus, the 251-residue chain is Large ribosomal subunit protein uL3 (251 aa).

At glutamine 151 the chain carries N5-methylglutamine. Residues 214 to 251 (KDAPFPAGLKSAANSNSAPTETPAEEVAAPEATEGQEG) are disordered. Low complexity predominate over residues 231 to 251 (APTETPAEEVAAPEATEGQEG).

The protein belongs to the universal ribosomal protein uL3 family. In terms of assembly, part of the 50S ribosomal subunit. Forms a cluster with proteins L14 and L19. Methylated by PrmB.

Its function is as follows. One of the primary rRNA binding proteins, it binds directly near the 3'-end of the 23S rRNA, where it nucleates assembly of the 50S subunit. The protein is Large ribosomal subunit protein uL3 of Rhizorhabdus wittichii (strain DSM 6014 / CCUG 31198 / JCM 15750 / NBRC 105917 / EY 4224 / RW1) (Sphingomonas wittichii).